A 598-amino-acid chain; its full sequence is Elongation factor 4 (598 aa).

One can recognise a tr-type G domain in the interval 4-186 (SHIRNFAIIA…AIVSRLPAPS (183 aa)). GTP is bound by residues 16–21 (DHGKST) and 133–136 (NKID).

Belongs to the TRAFAC class translation factor GTPase superfamily. Classic translation factor GTPase family. LepA subfamily.

The protein localises to the cell inner membrane. The enzyme catalyses GTP + H2O = GDP + phosphate + H(+). In terms of biological role, required for accurate and efficient protein synthesis under certain stress conditions. May act as a fidelity factor of the translation reaction, by catalyzing a one-codon backward translocation of tRNAs on improperly translocated ribosomes. Back-translocation proceeds from a post-translocation (POST) complex to a pre-translocation (PRE) complex, thus giving elongation factor G a second chance to translocate the tRNAs correctly. Binds to ribosomes in a GTP-dependent manner. This Ehrlichia chaffeensis (strain ATCC CRL-10679 / Arkansas) protein is Elongation factor 4.